Reading from the N-terminus, the 329-residue chain is MTENQKVYDITIIGGGPTGLFTAFYGGMRQASVKIIESLPQLGGQLSALYPEKYIYDVAGFPKVRAQELVDNLKEQMKKFDPTVCLEEAVDTLEKQADGIFKLVTNKQTHYSKSVIITAGNGAFQPRRLELEGTAKYEKKNLHYFVDDMNKFAGRRVVVFGGGDSAVDWTMMLEPIADKVTIAHRRDKFRAHEHSVESLMNSRAEVSTPYVPVELIGDDTIEQVVLQHVKTEEKIIIDVDDVIVNYGFVSSLGPIKNWGLDIQKNSILVNSKMETNIPGIYAAGDICTYEGKVKLIACGFGEAPTAVNNAKAYFDPNAKLQPMHSSSMF.

8 residues coordinate FAD: Thr18, Glu37, Gln45, Tyr50, Val90, Phe124, Asp285, and Ser326.

This sequence belongs to the ferredoxin--NADP reductase type 2 family. Homodimer. FAD is required as a cofactor.

The enzyme catalyses 2 reduced [2Fe-2S]-[ferredoxin] + NADP(+) + H(+) = 2 oxidized [2Fe-2S]-[ferredoxin] + NADPH. The chain is Ferredoxin--NADP reductase 2 from Bacillus mycoides (strain KBAB4) (Bacillus weihenstephanensis).